Reading from the N-terminus, the 105-residue chain is uncharacterized protein (105 aa).

3 helical membrane passes run Ile14–Trp34, Glu41–Leu61, and Val80–Ile100.

It is found in the cell membrane. This is an uncharacterized protein from Treponema pallidum (strain Nichols).